Consider the following 878-residue polypeptide: Aconitate hydratase A (878 aa).

Cysteine 426, cysteine 492, and cysteine 495 together coordinate [4Fe-4S] cluster.

It belongs to the aconitase/IPM isomerase family. Monomer. It depends on [4Fe-4S] cluster as a cofactor.

The enzyme catalyses citrate = D-threo-isocitrate. It carries out the reaction (2S,3R)-3-hydroxybutane-1,2,3-tricarboxylate = 2-methyl-cis-aconitate + H2O. Its pathway is carbohydrate metabolism; tricarboxylic acid cycle; isocitrate from oxaloacetate: step 2/2. It participates in organic acid metabolism; propanoate degradation. Its function is as follows. Involved in the catabolism of short chain fatty acids (SCFA) via the tricarboxylic acid (TCA)(acetyl degradation route) and probably the 2-methylcitrate cycle I (propionate degradation route). Catalyzes the reversible isomerization of citrate to isocitrate via cis-aconitate. Could catalyze the hydration of 2-methyl-cis-aconitate to yield (2R,3S)-2-methylisocitrate. The apo form of AcnA functions as a RNA-binding regulatory protein. This Rickettsia conorii (strain ATCC VR-613 / Malish 7) protein is Aconitate hydratase A (acnA).